The primary structure comprises 469 residues: Flap endonuclease 1-B (469 aa).

The interval 1–103 (MGIKGLTGLL…GVLSKRLERR (103 aa)) is N-domain. A Mg(2+)-binding site is contributed by aspartate 32. The DNA site is built by arginine 45 and arginine 69. The Mg(2+) site is built by aspartate 85, glutamate 157, glutamate 159, aspartate 183, and aspartate 185. The segment at 121-257 (DVDRFSRRTV…KSALKLIREY (137 aa)) is I-domain. Glutamate 157 provides a ligand contact to DNA. DNA is bound by residues glycine 235 and aspartate 237. Aspartate 237 lines the Mg(2+) pocket. Positions 274-354 (QKAAQAAVES…GGMQIPEEWP (81 aa)) are disordered. 2 stretches are compositionally biased toward acidic residues: residues 282–295 (ESDE…EDEP) and 302–317 (EMPD…EEEA). Basic residues predominate over residues 326 to 342 (PKKKKASSKTKEKRKGK). An interaction with PCNA region spans residues 412–420 (QQGRLDGFF). The disordered stretch occupies residues 424-469 (PKEKAAAPAPVGKAKGKGKIDAKAKGTKRKVDEKAESSAGKKPRKK). Residues 441-459 (GKIDAKAKGTKRKVDEKAE) show a composition bias toward basic and acidic residues.

It belongs to the XPG/RAD2 endonuclease family. FEN1 subfamily. In terms of assembly, interacts with PCNA. Three molecules of FEN1 bind to one PCNA trimer with each molecule binding to one PCNA monomer. PCNA stimulates the nuclease activity without altering cleavage specificity. It depends on Mg(2+) as a cofactor. Post-translationally, phosphorylated. Phosphorylation upon DNA damage induces relocalization to the nuclear plasma.

It is found in the nucleus. It localises to the nucleolus. The protein resides in the nucleoplasm. The protein localises to the mitochondrion. Functionally, structure-specific nuclease with 5'-flap endonuclease and 5'-3' exonuclease activities involved in DNA replication and repair. During DNA replication, cleaves the 5'-overhanging flap structure that is generated by displacement synthesis when DNA polymerase encounters the 5'-end of a downstream Okazaki fragment. It enters the flap from the 5'-end and then tracks to cleave the flap base, leaving a nick for ligation. Also involved in the long patch base excision repair (LP-BER) pathway, by cleaving within the apurinic/apyrimidinic (AP) site-terminated flap. Acts as a genome stabilization factor that prevents flaps from equilibrating into structures that lead to duplications and deletions. Also possesses 5'-3' exonuclease activity on nicked or gapped double-stranded DNA, and exhibits RNase H activity. Also involved in replication and repair of rDNA and in repairing mitochondrial DNA. The polypeptide is Flap endonuclease 1-B (Laccaria bicolor (strain S238N-H82 / ATCC MYA-4686) (Bicoloured deceiver)).